Reading from the N-terminus, the 926-residue chain is Beta-mannosidase A (926 aa).

A signal peptide spans 1–21 (MHVKAETVLALLTPAPPSVVG). 5 N-linked (GlcNAc...) asparagine glycosylation sites follow: Asn40, Asn242, Asn277, Asn311, and Asn342. Residue Glu474 is the Proton donor of the active site. 10 N-linked (GlcNAc...) asparagine glycosylation sites follow: Asn532, Asn603, Asn626, Asn653, Asn733, Asn756, Asn785, Asn793, Asn819, and Asn905.

This sequence belongs to the glycosyl hydrolase 2 family. Beta-mannosidase A subfamily. In terms of assembly, homodimer.

The protein localises to the secreted. It catalyses the reaction Hydrolysis of terminal, non-reducing beta-D-mannose residues in beta-D-mannosides.. The protein operates within glycan metabolism; N-glycan degradation. In terms of biological role, exoglycosidase that cleaves the single beta-linked mannose residue from the non-reducing end of beta-mannosidic oligosaccharides of various complexity and length. Involved in the degradation of polymeric mannan and galactomannan. The sequence is that of Beta-mannosidase A (mndA) from Aspergillus fumigatus (strain CBS 144.89 / FGSC A1163 / CEA10) (Neosartorya fumigata).